We begin with the raw amino-acid sequence, 70 residues long: Mu-agatoxin-Ao1a (70 aa).

The N-terminal stretch at 1–20 is a signal peptide; it reads MKAIIFFCFLSVMVFIVAEA. The propeptide occupies 21 to 33; that stretch reads SSLEALKIFEGER. 4 disulfides stabilise this stretch: Cys-35–Cys-50, Cys-42–Cys-55, Cys-49–Cys-65, and Cys-57–Cys-63. At Asn-69 the chain carries Asparagine amide.

Belongs to the neurotoxin 07 (Beta/delta-agtx) family. 04 (aga-5) subfamily. As to expression, expressed by the venom gland.

The protein resides in the secreted. Its function is as follows. Insecticidal neurotoxin that modulates the insect Nav channel (DmNaV1/tipE (para/tipE)) in a unique manner, with both the activation and inactivation processes being affected. The voltage dependence of activation is shifted toward more hyperpolarized potentials (analogous to site 4 toxins) and a non-inactivating persistent sodium current is induced (site 3-like action). Interestingly, both effects take place in a voltage-dependent manner, producing a bell-shaped curve between -80 and 0 mV. In Agelena orientalis (Funnel-web spider), this protein is Mu-agatoxin-Ao1a.